Consider the following 523-residue polypeptide: Metalloendopeptidase OMA1, mitochondrial (523 aa).

The transit peptide at 1-45 (MSFIYGLQSAARNCFFFRFNLLTNWRKCNTQAVTSRDFHQVKINH) directs the protein to the mitochondrion. Residues 46-143 (IVNKSLGLGV…RSFHTSPRCQ (98 aa)) constitute a propeptide that is removed on maturation. Topologically, residues 144-195 (AAPAPLLLMILKPAQKLLAIIVGRGIRKWWQALPPNKKELFKESLRKNKWKL) are mitochondrial matrix. Residues 148–167 (PLLLMILKPAQKLLAIIVGR) form a cardiolipin-binding region. The segment at 165–195 (VGRGIRKWWQALPPNKKELFKESLRKNKWKL) is stress-sensor region. The chain crosses the membrane as a helical span at residues 196–216 (FLGLSSFGLLFVVFYFTHLEV). Zn(2+) is bound at residue H327. Residue E328 is part of the active site. Residues H331 and E392 each coordinate Zn(2+). Cysteines 407 and 465 form a disulfide.

It belongs to the peptidase M48 family. As to quaternary structure, homooligomer. Requires Zn(2+) as cofactor. In terms of processing, autocatalytically cleaved in response to mitochondrial depolarization both at the N-terminus and C-terminus to generate the short active form (S-OMA1). Autocatalytic processing at the C-terminus takes place at residues 447-456. The S-OMA1 form is unstable. OMA1 pre-processing by AFG3L2 may participate in maturation before OMA1 autocatalytic cleavage. Degraded by YMEL1 in response to membrane depolarization. Protein turnover is regulated by prohibitin (PHB and PHB2), which promotes degradation of OMA1 in a cardiolipin-binding manner. Post-translationally, may form a redox-dependent disulfide bond. Exists in a semi-oxidized state and is activated by prolonged hypoxia.

The protein localises to the mitochondrion inner membrane. Its activity is regulated as follows. Protease activity is activated upon autocatalytic cleavage in response to mitochondrial depolarization. Its function is as follows. Metalloprotease that is part of the quality control system in the inner membrane of mitochondria. Activated in response to various mitochondrial stress, leading to the proteolytic cleavage of target proteins, such as OPA1, UQCC3 and DELE1. Involved in the fusion of the mitochondrial inner membranes by mediating cleavage of OPA1 at S1 position, generating the soluble OPA1 (S-OPA1), which cooperates with the membrane form (L-OPA1) to coordinate the fusion of mitochondrial inner membranes. Following stress conditions that induce loss of mitochondrial membrane potential, mediates cleavage of OPA1, leading to excess production of soluble OPA1 (S-OPA1) and negative regulation of mitochondrial fusion. Involved in mitochondrial safeguard in response to transient mitochondrial membrane depolarization (flickering) by catalyzing cleavage of OPA1, leading to excess production of S-OPA1, preventing mitochondrial hyperfusion. Also acts as a regulator of apoptosis: upon BAK and BAX aggregation, mediates cleavage of OPA1, leading to the remodeling of mitochondrial cristae and allowing the release of cytochrome c from mitochondrial cristae. In depolarized mitochondria, may also act as a backup protease for PINK1 by mediating PINK1 cleavage and promoting its subsequent degradation by the proteasome. May also cleave UQCC3 in response to mitochondrial depolarization. Also acts as an activator of the integrated stress response (ISR): in response to mitochondrial stress, mediates cleavage of DELE1 to generate the processed form of DELE1 (S-DELE1), which translocates to the cytosol and activates EIF2AK1/HRI to trigger the ISR. Its role in mitochondrial quality control is essential for regulating lipid metabolism as well as to maintain body temperature and energy expenditure under cold-stress conditions. Binds cardiolipin, possibly regulating its protein turnover. Required for the stability of the respiratory supercomplexes. The polypeptide is Metalloendopeptidase OMA1, mitochondrial (Bos taurus (Bovine)).